The following is a 783-amino-acid chain: E3 UFM1-protein ligase 1 homolog (783 aa).

The interval 406–476 (TLGTTHDADE…DAVQQSANSS (71 aa)) is disordered. Positions 446–457 (KSTKKHQRGRAA) are enriched in basic residues.

This sequence belongs to the UFL1 family.

E3 UFM1-protein ligase that mediates ufmylation of target proteins. The chain is E3 UFM1-protein ligase 1 homolog from Drosophila grimshawi (Hawaiian fruit fly).